A 430-amino-acid chain; its full sequence is Histidinol dehydrogenase (430 aa).

NAD(+) contacts are provided by Y130, Q191, and N214. Residues S237, Q259, and H262 each contribute to the substrate site. Zn(2+)-binding residues include Q259 and H262. Catalysis depends on proton acceptor residues E327 and H328. H328, D361, E415, and H420 together coordinate substrate. D361 contacts Zn(2+). A Zn(2+)-binding site is contributed by H420.

The protein belongs to the histidinol dehydrogenase family. It depends on Zn(2+) as a cofactor.

The enzyme catalyses L-histidinol + 2 NAD(+) + H2O = L-histidine + 2 NADH + 3 H(+). Its pathway is amino-acid biosynthesis; L-histidine biosynthesis; L-histidine from 5-phospho-alpha-D-ribose 1-diphosphate: step 9/9. Catalyzes the sequential NAD-dependent oxidations of L-histidinol to L-histidinaldehyde and then to L-histidine. This chain is Histidinol dehydrogenase, found in Brucella suis biovar 1 (strain 1330).